A 613-amino-acid polypeptide reads, in one-letter code: Serine/threonine-protein kinase pkpA (613 aa).

One can recognise a Protein kinase domain in the interval 17-269 (SKLNTVLGKG…AQEILEHRFL (253 aa)). Residues 23-31 (LGKGAYKVV) and K50 contribute to the ATP site. The active-site Proton acceptor is D140. Disordered regions lie at residues 424–475 (LQPQ…STML) and 589–613 (VTQRGLQGTRSGASTPVEEQEQELM). A compositionally biased stretch (pro residues) spans 427-441 (QPQPQPQPQPQPQPQ). Residues 442 to 475 (PQFQLQPQLQYLSPQSTTSPGPTSDDNSTNSTML) are compositionally biased toward low complexity. Residues 592–602 (RGLQGTRSGAS) are compositionally biased toward polar residues.

Belongs to the protein kinase superfamily. Ser/Thr protein kinase family.

The catalysed reaction is L-seryl-[protein] + ATP = O-phospho-L-seryl-[protein] + ADP + H(+). The enzyme catalyses L-threonyl-[protein] + ATP = O-phospho-L-threonyl-[protein] + ADP + H(+). Functionally, serine/threonine protein kinase that probably participates as an intermediate in an intracellular system controlling nuclear proliferation. In Phycomyces blakesleeanus (strain ATCC 8743b / DSM 1359 / FGSC 10004 / NBRC 33097 / NRRL 1555), this protein is Serine/threonine-protein kinase pkpA (pkpA).